The sequence spans 1013 residues: Alpha-2-macroglobulin homolog (1013 aa).

A disordered region spans residues Ala804–Asn844.

The protein belongs to the protease inhibitor I39 (alpha-2-macroglobulin) family. Bacterial alpha-2-macroglobulin subfamily.

This chain is Alpha-2-macroglobulin homolog, found in Deinococcus radiodurans (strain ATCC 13939 / DSM 20539 / JCM 16871 / CCUG 27074 / LMG 4051 / NBRC 15346 / NCIMB 9279 / VKM B-1422 / R1).